Reading from the N-terminus, the 71-residue chain is Small ribosomal subunit protein bS21 (71 aa).

The protein belongs to the bacterial ribosomal protein bS21 family.

The protein is Small ribosomal subunit protein bS21 of Photobacterium profundum (strain SS9).